The following is a 320-amino-acid chain: Cytochrome f (320 aa).

The N-terminal stretch at methionine 1–alanine 35 is a signal peptide. The heme site is built by tyrosine 36, cysteine 56, cysteine 59, and histidine 60. The chain crosses the membrane as a helical span at residues valine 286–lysine 306.

It belongs to the cytochrome f family. As to quaternary structure, the 4 large subunits of the cytochrome b6-f complex are cytochrome b6, subunit IV (17 kDa polypeptide, petD), cytochrome f and the Rieske protein, while the 4 small subunits are PetG, PetL, PetM and PetN. The complex functions as a dimer. It depends on heme as a cofactor.

The protein localises to the plastid. It is found in the chloroplast thylakoid membrane. In terms of biological role, component of the cytochrome b6-f complex, which mediates electron transfer between photosystem II (PSII) and photosystem I (PSI), cyclic electron flow around PSI, and state transitions. The polypeptide is Cytochrome f (Hordeum vulgare (Barley)).